The primary structure comprises 622 residues: Elongation factor 4 (622 aa).

In terms of domain architecture, tr-type G spans 17-201 (ALIRNFCIIA…KVVAEVPAPV (185 aa)). GTP-binding positions include 29 to 34 (DHGKST) and 148 to 151 (NKID).

This sequence belongs to the TRAFAC class translation factor GTPase superfamily. Classic translation factor GTPase family. LepA subfamily.

It localises to the cell membrane. It carries out the reaction GTP + H2O = GDP + phosphate + H(+). Functionally, required for accurate and efficient protein synthesis under certain stress conditions. May act as a fidelity factor of the translation reaction, by catalyzing a one-codon backward translocation of tRNAs on improperly translocated ribosomes. Back-translocation proceeds from a post-translocation (POST) complex to a pre-translocation (PRE) complex, thus giving elongation factor G a second chance to translocate the tRNAs correctly. Binds to ribosomes in a GTP-dependent manner. The chain is Elongation factor 4 from Streptomyces coelicolor (strain ATCC BAA-471 / A3(2) / M145).